An 88-amino-acid polypeptide reads, in one-letter code: Phosphocarrier protein HPr (88 aa).

The 87-residue stretch at A2–E88 folds into the HPr domain. At S12 the chain carries Phosphoserine. The active-site Pros-phosphohistidine intermediate; alternate is the H15. H15 is subject to Tele-phosphohistidine; alternate. S46 is modified (phosphoserine; by HPrK/P).

Belongs to the HPr family. Post-translationally, phosphorylated during sporulation.

Its subcellular location is the cytoplasm. Phosphorylation on Ser-46 inhibits the phosphoryl transfer from enzyme I to HPr. General (non sugar-specific) component of the phosphoenolpyruvate-dependent sugar phosphotransferase system (sugar PTS). This major carbohydrate active-transport system catalyzes the phosphorylation of incoming sugar substrates concomitantly with their translocation across the cell membrane. The phosphoryl group from phosphoenolpyruvate (PEP) is transferred to the phosphoryl carrier protein HPr by enzyme I. Phospho-HPr then transfers it to the PTS EIIA domain. Its function is as follows. P-Ser-HPr interacts with the catabolite control protein A (CcpA), forming a complex that binds to DNA at the catabolite response elements cre, operator sites preceding a large number of catabolite-regulated genes. Thus, P-Ser-HPr is a corepressor in carbon catabolite repression (CCR), a mechanism that allows bacteria to coordinate and optimize the utilization of available carbon sources. P-Ser-HPr also plays a role in inducer exclusion, in which it probably interacts with several non-PTS permeases and inhibits their transport activity. The sequence is that of Phosphocarrier protein HPr (ptsH) from Bacillus subtilis (strain 168).